A 229-amino-acid chain; its full sequence is Heptaprenylglyceryl phosphate synthase (229 aa).

Residue K12 coordinates sn-glycerol 1-phosphate. Residues D14 and S40 each coordinate Mg(2+). Sn-glycerol 1-phosphate-binding positions include 159 to 164, G189, and 209 to 210; these read YLEYSG and GN.

The protein belongs to the GGGP/HepGP synthase family. Group I subfamily. In terms of assembly, homodimer. Mg(2+) serves as cofactor.

It carries out the reaction sn-glycerol 1-phosphate + all-trans-heptaprenyl diphosphate = 3-heptaprenyl-sn-glycero-1-phosphate + diphosphate. The protein operates within membrane lipid metabolism; glycerophospholipid metabolism. Prenyltransferase that catalyzes in vivo the transfer of the heptaprenyl moiety of heptaprenyl pyrophosphate (HepPP; 35 carbon atoms) to the C3 hydroxyl of sn-glycerol-1-phosphate (G1P), producing heptaprenylglyceryl phosphate (HepGP). This reaction is an ether-bond-formation step in the biosynthesis of archaea-type G1P-based membrane lipids found in Bacillales. The protein is Heptaprenylglyceryl phosphate synthase of Bacillus cereus (strain ATCC 10987 / NRS 248).